The sequence spans 636 residues: Methionine--tRNA ligase (636 aa).

Positions 12 to 22 match the 'HIGH' region motif; the sequence is YYVNGDPHVGS. 4 residues coordinate Zn(2+): Cys-127, Cys-130, Cys-145, and Cys-148. The 'KMSKS' region signature appears at 298 to 302; the sequence is KMSKS. Lys-301 provides a ligand contact to ATP. Residues 535 to 636 enclose the tRNA-binding domain; the sequence is EFNKIEIKVV…KTVEAGAIVS (102 aa).

Belongs to the class-I aminoacyl-tRNA synthetase family. MetG type 2A subfamily. As to quaternary structure, homodimer. Zn(2+) serves as cofactor.

It is found in the cytoplasm. The catalysed reaction is tRNA(Met) + L-methionine + ATP = L-methionyl-tRNA(Met) + AMP + diphosphate. In terms of biological role, is required not only for elongation of protein synthesis but also for the initiation of all mRNA translation through initiator tRNA(fMet) aminoacylation. The protein is Methionine--tRNA ligase (metG) of Fusobacterium nucleatum subsp. nucleatum (strain ATCC 25586 / DSM 15643 / BCRC 10681 / CIP 101130 / JCM 8532 / KCTC 2640 / LMG 13131 / VPI 4355).